Here is a 204-residue protein sequence, read N- to C-terminus: uncharacterized protein (204 aa).

The signal sequence occupies residues 1–17; it reads MKRLVTGLLALSLFLAA. Residues 17 to 102 form a disordered region; sequence ACGQDSDQQK…NQSSNNQKSS (86 aa). Cysteine 18 carries N-palmitoyl cysteine lipidation. Residue cysteine 18 is the site of S-diacylglycerol cysteine attachment. The segment covering 23–70 has biased composition (basic and acidic residues); sequence DQQKDSNKEKDDKAKTEQQDKKTNDSSKDKKDNKDDSKDVNKDNKDNS. A compositionally biased stretch (low complexity) spans 71–102; it reads ANDNQQQSNSNATNNDQNQTNNNQSSNNQKSS.

Its subcellular location is the cell membrane. This is an uncharacterized protein from Staphylococcus aureus (strain Mu50 / ATCC 700699).